Here is a 534-residue protein sequence, read N- to C-terminus: MNPILVLLCVIALGLLVGRVSFRGISLGTSAILFVALLAGHYGWTIPTGFGTLGLALFVYCVGISAGPTFFRGLASHGRAMAITGSVIVLTGVAVTWTSARLLGLPAELAGGLMAGAMTSTPALGAITQSSSDPAAVAVGFGVAYPIGIIAVVLFVQIAIKLFAKPGDSDGTDSASETSGQSSAEIAESNSIGRRVVRIANPVVSGKRPSDIVAFADSPCQMSRVQREGRWRPTPPDYQFEIGDDVMLVGGASEIRRVSETLGELQDTAEPVVDADRERRYVVVTSPEIYGRTLKELRLRSKYGVTIVRVQRHDVEFVPSARTRIEFGDGLVAVGEPDALAKIANAVGHRPRTVNETDLLSLVAGIVLGIFVGNLSLQIGEFSMSLGIAGGPLMVGLILGHFRRLGPIRGSYPPAAMLLMTEGGLALFLADAGLNAGANVVEVLMERGAMLCVAAAAIAIIPLLVGFAGSRYFGGRTLWQSLGATCGGMTSTPGLAVLTGATDSSQPATSYVAAYPVALVLITVAAPWLVELIG.

5 consecutive transmembrane segments (helical) span residues 4–22 (ILVL…RVSF), 24–46 (GISL…GWTI), 56–75 (ALFV…RGLA), 82–104 (AITG…RLLG), and 134–156 (PAAV…VLFV). A disordered region spans residues 167 to 187 (GDSDGTDSASETSGQSSAEIA). A compositionally biased stretch (polar residues) spans 172 to 187 (TDSASETSGQSSAEIA). 2 RCK C-terminal domains span residues 180-264 (GQSS…TLGE) and 265-349 (LQDT…AVGH). 6 helical membrane-spanning segments follow: residues 359–378 (LLSL…LSLQ), 382–401 (FSMS…ILGH), 408–430 (IRGS…LFLA), 445–467 (MERG…LVGF), 479–501 (WQSL…LTGA), and 511–533 (YVAA…VELI).

It belongs to the AAE transporter (TC 2.A.81) family.

It localises to the cell membrane. This is an uncharacterized protein from Rhodopirellula baltica (strain DSM 10527 / NCIMB 13988 / SH1).